Consider the following 562-residue polypeptide: NAD-dependent malic enzyme (562 aa).

Y101 acts as the Proton donor in catalysis. R154 is a binding site for NAD(+). K172 acts as the Proton acceptor in catalysis. Residues E243, D244, and D267 each coordinate a divalent metal cation. 2 residues coordinate NAD(+): D267 and N415.

Belongs to the malic enzymes family. In terms of assembly, homotetramer. Mg(2+) serves as cofactor. Requires Mn(2+) as cofactor.

The catalysed reaction is (S)-malate + NAD(+) = pyruvate + CO2 + NADH. It carries out the reaction oxaloacetate + H(+) = pyruvate + CO2. The sequence is that of NAD-dependent malic enzyme from Aliivibrio salmonicida (strain LFI1238) (Vibrio salmonicida (strain LFI1238)).